Here is a 327-residue protein sequence, read N- to C-terminus: Eukaryotic translation initiation factor 3 subunit I (327 aa).

WD repeat units lie at residues 8–49 (GHDR…GTYD), 51–91 (HNGV…NSVS), 144–183 (SLQT…DIVN), 188–227 (AHKF…CLKT), 229–268 (KAER…GHFE), and 285–324 (GHFG…LKFD).

It belongs to the eIF-3 subunit I family. As to quaternary structure, component of the eukaryotic translation initiation factor 3 (eIF-3) complex.

The protein localises to the cytoplasm. Functionally, component of the eukaryotic translation initiation factor 3 (eIF-3) complex, which is involved in protein synthesis of a specialized repertoire of mRNAs and, together with other initiation factors, stimulates binding of mRNA and methionyl-tRNAi to the 40S ribosome. The eIF-3 complex specifically targets and initiates translation of a subset of mRNAs involved in cell proliferation. This Brugia malayi (Filarial nematode worm) protein is Eukaryotic translation initiation factor 3 subunit I.